Reading from the N-terminus, the 95-residue chain is Protein TusB (95 aa).

Belongs to the DsrH/TusB family. As to quaternary structure, heterohexamer, formed by a dimer of trimers. The hexameric TusBCD complex contains 2 copies each of TusB, TusC and TusD. The TusBCD complex interacts with TusE.

Its subcellular location is the cytoplasm. In terms of biological role, part of a sulfur-relay system required for 2-thiolation of 5-methylaminomethyl-2-thiouridine (mnm(5)s(2)U) at tRNA wobble positions. This Sodalis glossinidius (strain morsitans) protein is Protein TusB.